A 777-amino-acid polypeptide reads, in one-letter code: Lon protease (777 aa).

Positions 11–204 (IPVLPLRDVV…FLMAIMETEI (194 aa)) constitute a Lon N-terminal domain. Position 356 to 363 (356 to 363 (GPPGVGKT)) interacts with ATP. Residues 592–773 (LNQIGQVVGL…EEVLKIALEN (182 aa)) form the Lon proteolytic domain. Active-site residues include S679 and K722.

This sequence belongs to the peptidase S16 family. Homohexamer. Organized in a ring with a central cavity.

Its subcellular location is the cytoplasm. The catalysed reaction is Hydrolysis of proteins in presence of ATP.. Its function is as follows. ATP-dependent serine protease that mediates the selective degradation of mutant and abnormal proteins as well as certain short-lived regulatory proteins. Required for cellular homeostasis and for survival from DNA damage and developmental changes induced by stress. Degrades polypeptides processively to yield small peptide fragments that are 5 to 10 amino acids long. Binds to DNA in a double-stranded, site-specific manner. This is Lon protease from Buchnera aphidicola subsp. Schizaphis graminum (strain Sg).